We begin with the raw amino-acid sequence, 911 residues long: Band 3 anion transport protein (911 aa).

Met1 carries the N-acetylmethionine modification. Positions 1 to 26 (MEELQDDYEDMMEENLEQEEYEDPDI) are enriched in acidic residues. The disordered stretch occupies residues 1-40 (MEELQDDYEDMMEENLEQEEYEDPDIPESQMEEPAAHDTE). The Cytoplasmic portion of the chain corresponds to 1–403 (MEELQDDYED…LSDITDAFSP (403 aa)). Phosphotyrosine is present on residues Tyr8, Tyr21, and Tyr46. The tract at residues 13–31 (EENLEQEEYEDPDIPESQM) is (Microbial infection) Interaction with P.falciparum (isolate K1) FBPA. Positions 55–290 (HKVYVELQEL…LGRAAATLMS (236 aa)) are globular. The segment at 176–185 (AVLTRSGDPS) is interaction with ANK1. Phosphoserine is present on residues Ser185 and Ser350. The segment at 304–357 (RGELLHSLEGFLDCSLVLPPTDAPSEQALLSLVPVQRELLRRRYQSSPAKPDSS) is dimerization arm. Phosphotyrosine is present on Tyr359. Residues 404-427 (QVLAAVIFIYFAALSPAITFGGLL) traverse the membrane as a helical segment. Residues 428-435 (GEKTRNQM) are Extracellular-facing. A helical membrane pass occupies residues 436-456 (GVSELLISTAVQGILFALLGA). The Cytoplasmic segment spans residues 457–459 (QPL). Residues 460–476 (LVVGFSGPLLVFEEAFF) form a discontinuously helical membrane-spanning segment. Residues 477–485 (SFCETNGLE) are Extracellular-facing. The helical transmembrane segment at 486 to 506 (YIVGRVWIGFWLILLVVLVVA) threads the bilayer. The Cytoplasmic portion of the chain corresponds to 507 to 518 (FEGSFLVRFISR). The helical transmembrane segment at 519-541 (YTQEIFSFLISLIFIYETFSKLI) threads the bilayer. The Extracellular segment spans residues 542-570 (KIFQDHPLQKTYNYNVLMVPKPQGPLPNT). Residues 559 to 630 (MVPKPQGPLP…DFFIQDTYTQ (72 aa)) form an involved in anion transport region. Residues 571–591 (ALLSLVLMAGTFFFAMMLRKF) form a helical membrane-spanning segment. The Cytoplasmic segment spans residues 592 to 602 (KNSSYFPGKLR). Residues 603 to 623 (RVIGDFGVPISILIMVLVDFF) form a helical membrane-spanning segment. Over 624-663 (IQDTYTQKLSVPDGFKVSNSSARGWVIHPLGLRSEFPIWM) the chain is Extracellular. The N-linked (GlcNAc...) (complex) asparagine glycan is linked to Asn642. The helical transmembrane segment at 664–684 (MFASALPALLVFILIFLESQI) threads the bilayer. Residues 685–700 (TTLIVSKPERKMVKGS) lie on the Cytoplasmic side of the membrane. The chain crosses the membrane as a helical span at residues 701–719 (GFHLDLLLVVGMGGVAALF). Residues 720 to 737 (GMPWLSATTVRSVTHANA) traverse the membrane as a discontinuously helical segment. Residues 720-761 (GMPWLSATTVRSVTHANALTVMGKASTPGAAAQIQEVKEQRI) form a (Microbial infection) 5ABC region; interaction with P.falciparum (isolate 3D7) MSP9 region. At 738–760 (LTVMGKASTPGAAAQIQEVKEQR) the chain is on the cytoplasmic side. 2 helical membrane passes run 761 to 781 (ISGL…PILS) and 782 to 800 (RIPL…VTSL). Residues 801–838 (SGIQLFDRILLLFKPPKYHPDVPYVKRVKTWRMHLFTG) lie on the Cytoplasmic side of the membrane. The discontinuously helical intramembrane region spans 839–869 (IQIICLAVLWVVKSTPASLALPFVLILTVPL). Residue Cys843 is the site of S-palmitoyl cysteine attachment. The Cytoplasmic segment spans residues 870–911 (RRVLLPLIFRNVELQCLDADDAKATFDEEEGRDEYDEVAMPV). Tyr904 is subject to Phosphotyrosine.

Belongs to the anion exchanger (TC 2.A.31) family. In terms of assembly, a dimer in solution, but in its membrane environment, it exists primarily as a mixture of dimers and tetramers and spans the membrane asymmetrically. Component of the ankyrin-1 complex in the erythrocyte, composed of ANK1, RHCE, RHAG, SLC4A1, EPB42, GYPA, GYPB and AQP1. Interacts with STOM; this interaction positively regulates SLC4A1 activity. Interacts with GYPA; a GYPA monomer is bound at each end of the SLC4A1 dimer forming a heterotetramer. Three SLC4A1 dimers (Band 3-I, Band 3-II and Band 3-III) participates in the ankyrin-1 complex. Interacts (via the cytoplasmic domain) with EPB42; this interaction is mediated by the SLC4A1 Band 3-I dimer. Interacts (via the cytoplasmic domain) directly with ANK1; this interaction is mediated by the SLC4A1 Band 3-II and Band 3-III dimers. Interacts with TMEM139. As to quaternary structure, (Microbial infection) Interacts (via N-terminus) with P.falciparum (isolate K1) aldolase FBPA; the interaction inhibits FBPA catalytic activity. In terms of assembly, (Microbial infection) Interacts (via the 5ABC region) with P.falciparum (isolate 3D7) MSP9/ABRA (via N-terminus). (Microbial infection) Interacts (via the 5ABC region) with P.falciparum (isolate 3D7) MSP1 p42 subunit. Post-translationally, phosphorylated on Tyr-8 and Tyr-21 most likely by SYK. PP1-resistant phosphorylation that precedes Tyr-359 and Tyr-904 phosphorylation. Phosphorylated on Tyr-359 and Tyr-904 most likely by LYN. PP1-inhibited phosphorylation that follows Tyr-8 and Tyr-21 phosphorylation. In terms of processing, N-glycosylated. In terms of tissue distribution, detected in erythrocytes (at protein level). Expressed in kidney (at protein level).

The protein localises to the cell membrane. It is found in the basolateral cell membrane. It catalyses the reaction hydrogencarbonate(in) + chloride(out) = hydrogencarbonate(out) + chloride(in). Phenyl isothiocyanate inhibits anion transport in vitro. Functionally, functions both as a transporter that mediates electroneutral anion exchange across the cell membrane and as a structural protein. Component of the ankyrin-1 complex of the erythrocyte membrane; required for normal flexibility and stability of the erythrocyte membrane and for normal erythrocyte shape via the interactions of its cytoplasmic domain with cytoskeletal proteins, glycolytic enzymes, and hemoglobin. Functions as a transporter that mediates the 1:1 exchange of inorganic anions across the erythrocyte membrane. Mediates chloride-bicarbonate exchange in the kidney, and is required for normal acidification of the urine. (Microbial infection) Acts as a receptor for P.falciparum (isolate 3D7) MSP9 and thus, facilitates merozoite invasion of erythrocytes. Acts as a receptor for P.falciparum (isolate 3D7) MSP1 and thus, facilitates merozoite invasion of erythrocytes. The polypeptide is Band 3 anion transport protein (Homo sapiens (Human)).